A 369-amino-acid polypeptide reads, in one-letter code: Small ribosomal subunit biogenesis GTPase RsgA (369 aa).

A CP-type G domain is found at 88-246 (RTVLERPPVA…LADTPGFNQP (159 aa)). Residues 137 to 140 (NKQD) and 188 to 196 (GPSGVGKSS) each bind GTP. 4 residues coordinate Zn(2+): cysteine 271, cysteine 276, histidine 278, and cysteine 284. The segment at 307 to 369 (QNPENSRETD…DLDNLQEDWE (63 aa)) is disordered. Residues 359 to 369 (TDLDNLQEDWE) are compositionally biased toward acidic residues.

The protein belongs to the TRAFAC class YlqF/YawG GTPase family. RsgA subfamily. As to quaternary structure, monomer. Associates with 30S ribosomal subunit, binds 16S rRNA. Requires Zn(2+) as cofactor.

The protein resides in the cytoplasm. Its function is as follows. One of several proteins that assist in the late maturation steps of the functional core of the 30S ribosomal subunit. Helps release RbfA from mature subunits. May play a role in the assembly of ribosomal proteins into the subunit. Circularly permuted GTPase that catalyzes slow GTP hydrolysis, GTPase activity is stimulated by the 30S ribosomal subunit. The chain is Small ribosomal subunit biogenesis GTPase RsgA from Synechocystis sp. (strain ATCC 27184 / PCC 6803 / Kazusa).